The chain runs to 226 residues: 2-C-methyl-D-erythritol 4-phosphate cytidylyltransferase (226 aa).

The protein belongs to the IspD/TarI cytidylyltransferase family. IspD subfamily.

The catalysed reaction is 2-C-methyl-D-erythritol 4-phosphate + CTP + H(+) = 4-CDP-2-C-methyl-D-erythritol + diphosphate. It functions in the pathway isoprenoid biosynthesis; isopentenyl diphosphate biosynthesis via DXP pathway; isopentenyl diphosphate from 1-deoxy-D-xylulose 5-phosphate: step 2/6. Functionally, catalyzes the formation of 4-diphosphocytidyl-2-C-methyl-D-erythritol from CTP and 2-C-methyl-D-erythritol 4-phosphate (MEP). The chain is 2-C-methyl-D-erythritol 4-phosphate cytidylyltransferase from Prochlorococcus marinus (strain MIT 9312).